A 379-amino-acid chain; its full sequence is Arginine biosynthesis bifunctional protein ArgJ (379 aa).

6 residues coordinate substrate: T141, K163, T174, E252, N374, and T379. The Nucleophile role is filled by T174.

This sequence belongs to the ArgJ family. Heterotetramer of two alpha and two beta chains.

It localises to the cytoplasm. It carries out the reaction N(2)-acetyl-L-ornithine + L-glutamate = N-acetyl-L-glutamate + L-ornithine. It catalyses the reaction L-glutamate + acetyl-CoA = N-acetyl-L-glutamate + CoA + H(+). Its pathway is amino-acid biosynthesis; L-arginine biosynthesis; L-ornithine and N-acetyl-L-glutamate from L-glutamate and N(2)-acetyl-L-ornithine (cyclic): step 1/1. It participates in amino-acid biosynthesis; L-arginine biosynthesis; N(2)-acetyl-L-ornithine from L-glutamate: step 1/4. Catalyzes two activities which are involved in the cyclic version of arginine biosynthesis: the synthesis of N-acetylglutamate from glutamate and acetyl-CoA as the acetyl donor, and of ornithine by transacetylation between N(2)-acetylornithine and glutamate. In Aquifex aeolicus (strain VF5), this protein is Arginine biosynthesis bifunctional protein ArgJ.